Here is a 254-residue protein sequence, read N- to C-terminus: Protein EFFECTOR OF TRANSCRIPTION 3 (254 aa).

Residues 103–152 (RCTGLYELGVGVIGQDQGQNFDPDNNVLGVYVGQCVDVKSRLQDYGRRGG) form the GIY-YIG domain.

It localises to the cytoplasm. In Arabidopsis thaliana (Mouse-ear cress), this protein is Protein EFFECTOR OF TRANSCRIPTION 3.